The sequence spans 201 residues: Lipopolysaccharide core heptose(II)-phosphate phosphatase (201 aa).

A signal peptide spans 1-35; it reads MLAFTLRFIKNKRYLATLAGALVIIAGLTSQHAWS.

It belongs to the phosphoglycerate mutase family. Ais subfamily.

The protein resides in the periplasm. It participates in bacterial outer membrane biogenesis; lipopolysaccharide metabolism. In terms of biological role, catalyzes the dephosphorylation of heptose(II) of the outer membrane lipopolysaccharide core. The protein is Lipopolysaccharide core heptose(II)-phosphate phosphatase of Salmonella schwarzengrund (strain CVM19633).